Here is a 59-residue protein sequence, read N- to C-terminus: UPF0434 protein plu1633 (59 aa).

Belongs to the UPF0434 family.

In Photorhabdus laumondii subsp. laumondii (strain DSM 15139 / CIP 105565 / TT01) (Photorhabdus luminescens subsp. laumondii), this protein is UPF0434 protein plu1633.